The sequence spans 386 residues: Ferredoxin--NADP reductase (386 aa).

The CpcD-like domain occupies 9 to 67; that stretch reads SRMFRYEVVGLRQTAETEKTNYAIRNSGSQFFNVPYDRMNQFMQQITRWGGKIVSIQPL. The FAD-binding FR-type domain maps to 104–228; the sequence is NNPCIGKVIS…TGPVGKEMLL (125 aa). FAD is bound by residues 163–166, 184–186, Tyr190, 202–204, and Thr243; these read RLYS, CVR, and VCS. NADP(+) contacts are provided by Ser166 and Arg186. Residues Thr243, 275 to 276, 305 to 306, 315 to 319, 344 to 345, and Glu384 contribute to the NADP(+) site; these read VA, SR, KMYIQ, and GL.

This sequence belongs to the ferredoxin--NADP reductase type 1 family. FAD is required as a cofactor.

It localises to the cellular thylakoid membrane. The enzyme catalyses 2 reduced [2Fe-2S]-[ferredoxin] + NADP(+) + H(+) = 2 oxidized [2Fe-2S]-[ferredoxin] + NADPH. The polypeptide is Ferredoxin--NADP reductase (petH) (Thermosynechococcus vestitus (strain NIES-2133 / IAM M-273 / BP-1)).